A 276-amino-acid chain; its full sequence is Large ribosomal subunit protein uL2 (276 aa).

The interval 219-268 (TVRGSVMNPNDHPHGGGEGRQPVGRKSPMTPWGKPALGLKTRNKKAKSSK) is disordered.

It belongs to the universal ribosomal protein uL2 family. In terms of assembly, part of the 50S ribosomal subunit. Forms a bridge to the 30S subunit in the 70S ribosome.

Its function is as follows. One of the primary rRNA binding proteins. Required for association of the 30S and 50S subunits to form the 70S ribosome, for tRNA binding and peptide bond formation. It has been suggested to have peptidyltransferase activity; this is somewhat controversial. Makes several contacts with the 16S rRNA in the 70S ribosome. This chain is Large ribosomal subunit protein uL2, found in Lactococcus lactis subsp. lactis (strain IL1403) (Streptococcus lactis).